Consider the following 138-residue polypeptide: Small ribosomal subunit protein uS11c (138 aa).

Belongs to the universal ribosomal protein uS11 family. Part of the 30S ribosomal subunit.

Its subcellular location is the plastid. The protein is Small ribosomal subunit protein uS11c of Cuscuta gronovii (Common dodder).